The chain runs to 296 residues: Polyadenylate-binding protein 2 (296 aa).

The segment at 1 to 102 (MAAVSSAASL…EEEPGELTGD (102 aa)) is disordered. Composition is skewed to gly residues over residues 19–31 (LRGG…GGQD) and 71–82 (GRGGSGGGGAGG). The span at 84 to 97 (EELEDEELEEEEPG) shows a compositional bias: acidic residues. Positions 107-141 (DPELEAIKARVREMEEEAEKLKELQNEVEKQMNMS) form a coiled coil. Residues 146–296 (NAGPVIMSIE…ARVTSWYTPY (151 aa)) form a necessary for homooligomerization region. Residues 163–240 (RSIYVGNVDY…RQIKVVPKRT (78 aa)) form the RRM domain.

As to quaternary structure, monomer and homooligomer. Binds RNA as a monomer and oligomerizes when bound to poly(A).

It is found in the nucleus. The protein resides in the cytoplasm. Functionally, involved in the 3'-end formation of mRNA precursors (pre-mRNA) by the addition of a poly(A) tail of 200-250 nt to the upstream cleavage product. Stimulates poly(A) polymerase (PAPOLA) conferring processivity on the poly(A) tail elongation reaction and also controls the poly(A) tail length. Increases the affinity of poly(A) polymerase for RNA. Binds to poly(A) and to poly(G) with high affinity. May protect the poly(A) tail from degradation. This Xenopus tropicalis (Western clawed frog) protein is Polyadenylate-binding protein 2.